The sequence spans 471 residues: Major facilitator-type transporter psiT1 (471 aa).

A disordered region spans residues 1 to 36 (MNPTTATDAHERTSLLSGRPQSAANSTAPYERQVQP). Residues 14–36 (SLLSGRPQSAANSTAPYERQVQP) show a composition bias toward polar residues. Residue Asn-25 is glycosylated (N-linked (GlcNAc...) asparagine). 8 helical membrane passes run 44 to 64 (TPVTVITIITLIYRLATTMVI), 108 to 128 (AIMVSMTTVIDGLGGILGTGI), 140 to 160 (PVLMFLLSCTMIDHLAILTVQ), 168 to 188 (LVTFGLIMIVETIGNENTTVF), 212 to 232 (GWLVLGGALAYSIGGSITTFL), 237 to 257 (AVYIVSFSVTGIVLTFTAFVL), 322 to 342 (LHSFIVTLADAYALPAMLIFF), and 356 to 376 (VMTTYSVSSVFVLAIALPLFI). N-linked (GlcNAc...) asparagine glycosylation occurs at Asn-384. The chain crosses the membrane as a helical span at residues 424–444 (VHITVISWTIESLAYIVLGTV).

This sequence belongs to the major facilitator superfamily. TCR/Tet family.

It localises to the membrane. Its function is as follows. Major facilitator-type transporter; part of the gene cluster that mediates the biosynthesis of psilocybin, a psychotropic tryptamine-derived natural product. This is Major facilitator-type transporter psiT1 from Psilocybe cyanescens.